The primary structure comprises 314 residues: Acetaldehyde dehydrogenase (314 aa).

15–18 (SGNI) lines the NAD(+) pocket. Cys-133 (acyl-thioester intermediate) is an active-site residue. NAD(+) is bound by residues 164–172 (SAGPGTRAN) and Asn-292.

It belongs to the acetaldehyde dehydrogenase family.

The enzyme catalyses acetaldehyde + NAD(+) + CoA = acetyl-CoA + NADH + H(+). The protein is Acetaldehyde dehydrogenase of Paraburkholderia phytofirmans (strain DSM 17436 / LMG 22146 / PsJN) (Burkholderia phytofirmans).